A 405-amino-acid chain; its full sequence is Multi-drug resistance efflux pump PmrA homolog (405 aa).

A run of 12 helical transmembrane segments spans residues leucine 13–phenylalanine 33, leucine 50–tryptophan 70, isoleucine 88–glycine 108, leucine 111–alanine 131, methionine 147–methionine 167, valine 170–histidine 190, isoleucine 216–proline 236, phenylalanine 254–leucine 274, leucine 286–serine 306, leucine 308–valine 328, methionine 350–isoleucine 370, and alanine 374–phenylalanine 394.

The protein belongs to the major facilitator superfamily. TCR/Tet family.

The protein localises to the cell membrane. Functionally, efflux pump for various substrates. This Lactococcus lactis subsp. lactis (strain IL1403) (Streptococcus lactis) protein is Multi-drug resistance efflux pump PmrA homolog (pmrA).